The following is a 272-amino-acid chain: Ribonuclease HII (272 aa).

Positions 87-272 constitute an RNase H type-2 domain; it reads KYVAGVDEVG…HRMSFLKNIL (186 aa). A divalent metal cation is bound by residues aspartate 93, glutamate 94, and aspartate 188.

This sequence belongs to the RNase HII family. The cofactor is Mn(2+). Mg(2+) is required as a cofactor.

Its subcellular location is the cytoplasm. The catalysed reaction is Endonucleolytic cleavage to 5'-phosphomonoester.. Functionally, endonuclease that specifically degrades the RNA of RNA-DNA hybrids. In Clostridium perfringens (strain 13 / Type A), this protein is Ribonuclease HII.